We begin with the raw amino-acid sequence, 268 residues long: Ribosomal RNA small subunit methyltransferase A (268 aa).

Residues Asn21, Leu23, Gly48, Glu69, Asp94, and Asn115 each coordinate S-adenosyl-L-methionine.

This sequence belongs to the class I-like SAM-binding methyltransferase superfamily. rRNA adenine N(6)-methyltransferase family. RsmA subfamily.

It is found in the cytoplasm. It catalyses the reaction adenosine(1518)/adenosine(1519) in 16S rRNA + 4 S-adenosyl-L-methionine = N(6)-dimethyladenosine(1518)/N(6)-dimethyladenosine(1519) in 16S rRNA + 4 S-adenosyl-L-homocysteine + 4 H(+). In terms of biological role, specifically dimethylates two adjacent adenosines (A1518 and A1519) in the loop of a conserved hairpin near the 3'-end of 16S rRNA in the 30S particle. May play a critical role in biogenesis of 30S subunits. In Saccharophagus degradans (strain 2-40 / ATCC 43961 / DSM 17024), this protein is Ribosomal RNA small subunit methyltransferase A.